The primary structure comprises 96 residues: uncharacterized protein (96 aa).

Residues C10, C16, and C55 each coordinate [3Fe-4S] cluster. Residues 67-96 (AGDGERASADPAPSPAEAERHAAKDQHNLG) form a disordered region. Residues 83-96 (EAERHAAKDQHNLG) are compositionally biased toward basic and acidic residues.

[3Fe-4S] cluster serves as cofactor.

In terms of biological role, electron transport protein for the cytochrome systems. This is an uncharacterized protein from Bradyrhizobium diazoefficiens (strain JCM 10833 / BCRC 13528 / IAM 13628 / NBRC 14792 / USDA 110).